We begin with the raw amino-acid sequence, 137 residues long: Proofreading thioesterase EntH (137 aa).

Glu63 functions as the Nucleophile or proton acceptor in the catalytic mechanism.

Belongs to the thioesterase PaaI family. Homotetramer. Dimer of dimers. Interacts specifically with the aryl carrier protein (ArCP) domain of EntB.

The protein resides in the cytoplasm. The protein operates within siderophore biosynthesis; enterobactin biosynthesis. Required for optimal enterobactin synthesis. Acts as a proofreading enzyme that prevents EntB misacylation by hydrolyzing the thioester bound existing between EntB and wrongly charged molecules. In Salmonella typhimurium (strain LT2 / SGSC1412 / ATCC 700720), this protein is Proofreading thioesterase EntH.